The following is a 435-amino-acid chain: Bystin (435 aa).

Residues 1 to 102 (MPKFKAARGA…VPQDGSDDEE (102 aa)) form a disordered region. Arg-40 is subject to Omega-N-methylarginine. A compositionally biased stretch (basic and acidic residues) spans 71–87 (AEHGSGDRPAVPRERTT). Ser-98 is subject to Phosphoserine. Position 154 is a phosphothreonine (Thr-154). Ser-165 and Ser-412 each carry phosphoserine.

It belongs to the bystin family. Binds trophinin, tastin and cytokeratins.

It is found in the cytoplasm. The protein resides in the nucleus. Its subcellular location is the nucleolus. Required for processing of 20S pre-rRNA precursor and biogenesis of 40S ribosomal subunits. The polypeptide is Bystin (BYSL) (Bos taurus (Bovine)).